The sequence spans 207 residues: MQQPCVIVGSKYCSPNPVGLAIVRKVMKITDGNFVITSADGKLLFKVKDPLFSLHGKRILLDCSGAKVLTLRGKMMTMHDRWQVFRGGSTEEGALLYTVKRSSMIQLAPKLEVFLANNVEEKICDFKVKGAWLDDSCVVYAGDSDTIIAHMCGKQTMRGFFFGKDHFSVTVDKNVDYAFIASLIVILVEIEKAGFITKMTTQMIIGF.

The protein belongs to the LOR family. As to expression, limited to discrete pathogen infection sites in leaves.

Its function is as follows. Involved in basal defense against virulent oomycetes. Might be related to the phospholipid scramblase and tubby-like superfamily of membrane tethered transcription factors. This chain is Protein LURP1 (LURP1), found in Arabidopsis thaliana (Mouse-ear cress).